A 199-amino-acid chain; its full sequence is Glycerol-3-phosphate acyltransferase (199 aa).

5 helical membrane passes run Ile-3–Val-23, Val-55–Ile-75, Phe-79–Leu-99, Val-113–Phe-133, and Tyr-155–Ile-175.

Belongs to the PlsY family. In terms of assembly, probably interacts with PlsX.

The protein localises to the cell inner membrane. It carries out the reaction an acyl phosphate + sn-glycerol 3-phosphate = a 1-acyl-sn-glycero-3-phosphate + phosphate. It participates in lipid metabolism; phospholipid metabolism. In terms of biological role, catalyzes the transfer of an acyl group from acyl-phosphate (acyl-PO(4)) to glycerol-3-phosphate (G3P) to form lysophosphatidic acid (LPA). This enzyme utilizes acyl-phosphate as fatty acyl donor, but not acyl-CoA or acyl-ACP. The chain is Glycerol-3-phosphate acyltransferase from Endomicrobium trichonymphae.